A 417-amino-acid polypeptide reads, in one-letter code: Exodeoxyribonuclease 7 large subunit (417 aa).

It belongs to the XseA family. Heterooligomer composed of large and small subunits.

It localises to the cytoplasm. The catalysed reaction is Exonucleolytic cleavage in either 5'- to 3'- or 3'- to 5'-direction to yield nucleoside 5'-phosphates.. Its function is as follows. Bidirectionally degrades single-stranded DNA into large acid-insoluble oligonucleotides, which are then degraded further into small acid-soluble oligonucleotides. The polypeptide is Exodeoxyribonuclease 7 large subunit (Helicobacter hepaticus (strain ATCC 51449 / 3B1)).